The chain runs to 225 residues: Late embryogenesis abundant protein 29 (225 aa).

2 disordered regions span residues 1-167 (MASN…GGFL) and 193-225 (TEEE…YQRK). Basic and acidic residues-rich tracts occupy residues 28-39 (MRDKAEEGRDKT), 49-61 (KAHE…KDKT), 71-83 (KAHE…KEKT), and 93-119 (KAHE…KDKA). LEA 11-mer repeat repeat units follow at residues 53 to 63 (TAQSAKDKTSQ), 75 to 85 (TAQSAKEKTSQ), and 97 to 107 (TTQAAKEKTSQ). The span at 141 to 153 (TKETAQGAAQYTK) shows a compositional bias: polar residues. Residues 154-163 (ETAEAGRDKT) are compositionally biased toward basic and acidic residues. Residues 205–225 (TTTTTATTRTTDPTHQTYQRK) show a composition bias toward low complexity.

The protein belongs to the LEA type 4 family.

The protein localises to the cytoplasm. The protein resides in the cytosol. Involved dehydration tolerance. The polypeptide is Late embryogenesis abundant protein 29 (Arabidopsis thaliana (Mouse-ear cress)).